The sequence spans 122 residues: Large ribosomal subunit protein uL14c (122 aa).

Belongs to the universal ribosomal protein uL14 family. As to quaternary structure, part of the 50S ribosomal subunit.

Its subcellular location is the plastid. It is found in the chloroplast. Binds to 23S rRNA. The sequence is that of Large ribosomal subunit protein uL14c from Vitis vinifera (Grape).